A 129-amino-acid chain; its full sequence is 3-aminoacrylate deaminase RutC (129 aa).

Belongs to the RutC family.

The enzyme catalyses (Z)-3-aminoacrylate + H2O + H(+) = 3-oxopropanoate + NH4(+). In terms of biological role, involved in pyrimidine catabolism. Catalyzes the deamination of 3-aminoacrylate to malonic semialdehyde, a reaction that can also occur spontaneously. RutC may facilitate the reaction and modulate the metabolic fitness, rather than catalyzing essential functions. In Caulobacter segnis (strain ATCC 21756 / DSM 7131 / JCM 7823 / NBRC 15250 / LMG 17158 / TK0059) (Mycoplana segnis), this protein is 3-aminoacrylate deaminase RutC.